Here is a 481-residue protein sequence, read N- to C-terminus: MQWEVVIGLEIHTQLATQSKIFSGSATTFGSEPNTQASLVDLGMPGVLPVLNEEAVRMACMFGLAIDAEIGKRNVFARKNYFYPDLPKGYQISQMDLPIVGKGHLDIALEDGTIKRIGVTRAHLEEDAGKSLHEDFSGSTGIDLNRAGTPLLEIVSEPDMRSAKEAVAYVKAIHALVRYLGICDGNMAEGSLRCDCNVSIRPKGQTEFGTRCEIKNVNSFRFIERAINSEIQRQIDLIEDGGKVVQETRLYDPNKDETRSMRSKEEANDYRYFPDPDLLPVVIEDSFLETIRAGLPELPPQKVERFQTQYGLSAYDANVLASSREQADYFEEVVKIGGDAKLAANWVMVELGSLLNKLGVEIDQAPVSAAQLGGMLLRIRDNTISGKIAKTVFEAMAAGEGDADSIIESKGLKQVTDTGAIDKMLDEMLAANAEQVEQYRAADEAKRGKMFGFFVGQAMKASKGKANPGQVNQLLKAKLEG.

Belongs to the GatB/GatE family. GatB subfamily. In terms of assembly, heterotrimer of A, B and C subunits.

It carries out the reaction L-glutamyl-tRNA(Gln) + L-glutamine + ATP + H2O = L-glutaminyl-tRNA(Gln) + L-glutamate + ADP + phosphate + H(+). The enzyme catalyses L-aspartyl-tRNA(Asn) + L-glutamine + ATP + H2O = L-asparaginyl-tRNA(Asn) + L-glutamate + ADP + phosphate + 2 H(+). Allows the formation of correctly charged Asn-tRNA(Asn) or Gln-tRNA(Gln) through the transamidation of misacylated Asp-tRNA(Asn) or Glu-tRNA(Gln) in organisms which lack either or both of asparaginyl-tRNA or glutaminyl-tRNA synthetases. The reaction takes place in the presence of glutamine and ATP through an activated phospho-Asp-tRNA(Asn) or phospho-Glu-tRNA(Gln). The sequence is that of Aspartyl/glutamyl-tRNA(Asn/Gln) amidotransferase subunit B from Pseudomonas putida (strain ATCC 700007 / DSM 6899 / JCM 31910 / BCRC 17059 / LMG 24140 / F1).